Consider the following 564-residue polypeptide: Dihydropyrimidinase-related protein 5 (564 aa).

A phosphothreonine mark is found at T509 and T514. S532 and S538 each carry phosphoserine. R559 bears the Omega-N-methylarginine mark.

This sequence belongs to the metallo-dependent hydrolases superfamily. Hydantoinase/dihydropyrimidinase family. As to quaternary structure, homotetramer, and heterotetramer with other DPYS-like proteins. Interacts with DPYSL2, DPYSL3 and DPYSL4. Interacts with MAP2 and TUBB3. In terms of tissue distribution, highly expressed in embryonic and early postnatal brain and spinal cord.

Its subcellular location is the cytoplasm. Involved in the negative regulation of dendrite outgrowth. This Rattus norvegicus (Rat) protein is Dihydropyrimidinase-related protein 5 (Dpysl5).